Here is a 368-residue protein sequence, read N- to C-terminus: tRNA-specific 2-thiouridylase MnmA (368 aa).

ATP contacts are provided by residues 11-18 and Met-37; that span reads GMSGGVDS. Positions 97–99 are interaction with target base in tRNA; it reads NPD. Cys-102 acts as the Nucleophile in catalysis. Cysteines 102 and 199 form a disulfide. Gly-127 is an ATP binding site. The interval 149–151 is interaction with tRNA; it reads KDQ. Residue Cys-199 is the Cysteine persulfide intermediate of the active site. Residues 311-312 form an interaction with tRNA region; the sequence is RY.

Belongs to the MnmA/TRMU family. Interacts with TusE.

Its subcellular location is the cytoplasm. It carries out the reaction S-sulfanyl-L-cysteinyl-[protein] + uridine(34) in tRNA + AH2 + ATP = 2-thiouridine(34) in tRNA + L-cysteinyl-[protein] + A + AMP + diphosphate + H(+). Catalyzes the 2-thiolation of uridine at the wobble position (U34) of tRNA(Lys), tRNA(Glu) and tRNA(Gln), leading to the formation of s(2)U34, the first step of tRNA-mnm(5)s(2)U34 synthesis. Sulfur is provided by IscS, via a sulfur-relay system. Binds ATP and its substrate tRNAs. This Escherichia coli (strain SMS-3-5 / SECEC) protein is tRNA-specific 2-thiouridylase MnmA.